A 173-amino-acid chain; its full sequence is Disulfide bond formation protein B (173 aa).

The Cytoplasmic segment spans residues 1–11 (MNALQWSFRAQ). The chain crosses the membrane as a helical span at residues 12 to 28 (CLTGFLFCTGLLAYAIF). At 29-46 (LQLHQGLEPCPLCIFQRI) the chain is on the periplasmic side. A disulfide bridge links cysteine 38 with cysteine 41. A helical transmembrane segment spans residues 47 to 63 (AFAVLGILFLIAGLYNS). Residues 64-70 (SNVYTRK) are Cytoplasmic-facing. A helical membrane pass occupies residues 71 to 88 (AYGLLIFLTAIIGTGIAG). The Periplasmic segment spans residues 89-145 (RHVWVQLMPHNTISSCGSPLSFLSETMGPFEVFRTVLTGTSNCGNIDWRFLGLSMPM). The cysteines at positions 104 and 131 are disulfide-linked. A helical membrane pass occupies residues 146-164 (WSMFWFVALALLGLLVGFK). The Cytoplasmic portion of the chain corresponds to 165-173 (AERRKPLFS).

The protein belongs to the DsbB family.

The protein localises to the cell inner membrane. Functionally, required for disulfide bond formation in some periplasmic proteins. Acts by oxidizing the DsbA protein. The polypeptide is Disulfide bond formation protein B (Xylella fastidiosa (strain Temecula1 / ATCC 700964)).